A 754-amino-acid chain; its full sequence is 1,4-alpha-glucan branching enzyme GlgB (754 aa).

D431 serves as the catalytic Nucleophile. E484 acts as the Proton donor in catalysis.

This sequence belongs to the glycosyl hydrolase 13 family. GlgB subfamily. In terms of assembly, monomer.

The catalysed reaction is Transfers a segment of a (1-&gt;4)-alpha-D-glucan chain to a primary hydroxy group in a similar glucan chain.. The protein operates within glycan biosynthesis; glycogen biosynthesis. Functionally, catalyzes the formation of the alpha-1,6-glucosidic linkages in glycogen by scission of a 1,4-alpha-linked oligosaccharide from growing alpha-1,4-glucan chains and the subsequent attachment of the oligosaccharide to the alpha-1,6 position. The chain is 1,4-alpha-glucan branching enzyme GlgB from Prochlorococcus marinus (strain MIT 9215).